The following is a 107-amino-acid chain: Small ribosomal subunit protein uS17 (107 aa).

Belongs to the universal ribosomal protein uS17 family. In terms of assembly, part of the 30S ribosomal subunit.

One of the primary rRNA binding proteins, it binds specifically to the 5'-end of 16S ribosomal RNA. This is Small ribosomal subunit protein uS17 from Nitrosopumilus maritimus (strain SCM1).